Consider the following 277-residue polypeptide: Ubiquinone biosynthesis protein COQ4, mitochondrial (277 aa).

A mitochondrion-targeting transit peptide spans 1–14 (MLTKRALRTTDPYR). Residues histidine 157, aspartate 158, histidine 161, and glutamate 173 each contribute to the Zn(2+) site.

Belongs to the COQ4 family. Component of a multi-subunit COQ enzyme complex, composed of at least COQ3, COQ4, COQ5, COQ6, COQ7 and COQ9. Zn(2+) serves as cofactor.

The protein localises to the mitochondrion inner membrane. The catalysed reaction is a 4-hydroxy-3-methoxy-5-(all-trans-polyprenyl)benzoate + H(+) = a 2-methoxy-6-(all-trans-polyprenyl)phenol + CO2. It participates in cofactor biosynthesis; ubiquinone biosynthesis. Lyase that catalyzes the C1-decarboxylation of 4-hydroxy-3-methoxy-5-(all-trans-polyprenyl)benzoic acid into 2-methoxy-6-(all-trans-polyprenyl)phenol during ubiquinone biosynthesis. This is Ubiquinone biosynthesis protein COQ4, mitochondrial from Ajellomyces capsulatus (strain NAm1 / WU24) (Darling's disease fungus).